The following is a 374-amino-acid chain: Quinolinate synthase (374 aa).

Iminosuccinate is bound by residues His53 and Ser70. Cys116 is a binding site for [4Fe-4S] cluster. Iminosuccinate is bound by residues 148–150 (YMN) and Ser169. Cys236 contacts [4Fe-4S] cluster. Iminosuccinate-binding positions include 262-264 (HPE) and Thr279. Cys327 provides a ligand contact to [4Fe-4S] cluster.

This sequence belongs to the quinolinate synthase family. Type 3 subfamily. Requires [4Fe-4S] cluster as cofactor.

Its subcellular location is the cytoplasm. The catalysed reaction is iminosuccinate + dihydroxyacetone phosphate = quinolinate + phosphate + 2 H2O + H(+). The protein operates within cofactor biosynthesis; NAD(+) biosynthesis; quinolinate from iminoaspartate: step 1/1. In terms of biological role, catalyzes the condensation of iminoaspartate with dihydroxyacetone phosphate to form quinolinate. This chain is Quinolinate synthase, found in Haloarcula marismortui (strain ATCC 43049 / DSM 3752 / JCM 8966 / VKM B-1809) (Halobacterium marismortui).